A 512-amino-acid polypeptide reads, in one-letter code: Glutathione-binding protein GsiB (512 aa).

Residues 1–26 form the signal peptide; that stretch reads MTQFITHKWLAALGLASSIAAFPALA.

The protein belongs to the bacterial solute-binding protein 5 family. The complex is composed of two ATP-binding proteins (GsiA), two transmembrane proteins (GsiC and GsiD) and a solute-binding protein (GsiB).

It is found in the periplasm. Part of the ABC transporter complex GsiABCD involved in glutathione import. Binds glutathione. This Salmonella typhi protein is Glutathione-binding protein GsiB.